A 628-amino-acid polypeptide reads, in one-letter code: CMP-5'-(3-aminopropyl)phosphonate synthase (628 aa).

Residues Met1 to Phe255 are mobA-like NTP transferase. The tract at residues Gly278–Gly628 is decarboxylase. Lys466 is modified (N6-(pyridoxal phosphate)lysine).

It in the N-terminal section; belongs to the MobA family. The protein in the C-terminal section; belongs to the class-I pyridoxal-phosphate-dependent aminotransferase family. Mg(2+) serves as cofactor. Pyridoxal 5'-phosphate is required as a cofactor.

The enzyme catalyses 2-amino-4-phosphonobutanoate + CTP = CMP-5'-(3-amino-3-carboxypropyl)phosphonate + diphosphate. It catalyses the reaction CMP-5'-(3-amino-3-carboxypropyl)phosphonate + H(+) = CMP-5'-(3-aminopropyl)phosphonate + CO2. Its pathway is antibiotic biosynthesis. Its function is as follows. Bifunctional cytidylyltransferase/decarboxylase involved in the biosynthesis of the phosphonate antibiotic FR-900098, a potent antimalarial agent that acts as an inhibitor of 1-deoxy-D-xylulose 5-phosphate reductoisomerase (DXR), the first enzyme in the nonmevalonate pathway for isoprenoid biosynthesis. Catalyzes the condensation of 2-amino-4-phosphonobutyrate (2APn) and CTP to form CMP-5'-2APn and then decarboxylates CMP-5'-2APn to yield CMP-5'-(3-aminopropyl)phosphonate (CMP-5'-3APn). The chain is CMP-5'-(3-aminopropyl)phosphonate synthase from Streptomyces rubellomurinus (strain ATCC 31215).